The chain runs to 1222 residues: ATP-dependent helicase/nuclease subunit A (1222 aa).

The UvrD-like helicase ATP-binding domain occupies 39–495 (QKRTAQQIEA…ILLKENFRSQ (457 aa)). 60–67 (ASAGSGKT) serves as a coordination point for ATP. Positions 524 to 810 (QLIAGSHAQT…NLMTIHKSKG (287 aa)) constitute a UvrD-like helicase C-terminal domain.

It belongs to the helicase family. AddA subfamily. Heterodimer of AddA and AddB/RexB. The cofactor is Mg(2+).

It catalyses the reaction Couples ATP hydrolysis with the unwinding of duplex DNA by translocating in the 3'-5' direction.. It carries out the reaction ATP + H2O = ADP + phosphate + H(+). In terms of biological role, the heterodimer acts as both an ATP-dependent DNA helicase and an ATP-dependent, dual-direction single-stranded exonuclease. Recognizes the chi site generating a DNA molecule suitable for the initiation of homologous recombination. The AddA nuclease domain is required for chi fragment generation; this subunit has the helicase and 3' -&gt; 5' nuclease activities. The polypeptide is ATP-dependent helicase/nuclease subunit A (Streptococcus pyogenes serotype M12 (strain MGAS9429)).